The sequence spans 344 residues: Heat-inducible transcription repressor HrcA (344 aa).

This sequence belongs to the HrcA family.

Functionally, negative regulator of class I heat shock genes (grpE-dnaK-dnaJ and groELS operons). Prevents heat-shock induction of these operons. This chain is Heat-inducible transcription repressor HrcA, found in Streptococcus equi subsp. zooepidemicus (strain H70).